A 131-amino-acid chain; its full sequence is Probable flagellum biosynthesis repressor protein FlbT (131 aa).

The protein belongs to the FlbT family.

In terms of biological role, has a post-transcriptional repressor function in flagellum biogenesis. Associates with the 5'-UTR of fljK mRNA and promotes its degradation. The polypeptide is Probable flagellum biosynthesis repressor protein FlbT (Caulobacter sp. (strain K31)).